A 562-amino-acid polypeptide reads, in one-letter code: IRK-interacting protein (562 aa).

Disordered regions lie at residues 29-61 (ASLM…RPLP) and 303-322 (VVSQ…SEMP). Over residues 36–61 (SSPSSNYSLRNPSSSSAASPASRPLP) the composition is skewed to low complexity. The stretch at 246–306 (SGVEKLKREL…LREATEVVSQ (61 aa)) forms a coiled coil.

In terms of assembly, interacts with IRK. As to expression, highly expressed in root tips, shoot apices and developing flowers.

The protein is IRK-interacting protein of Arabidopsis thaliana (Mouse-ear cress).